Consider the following 216-residue polypeptide: MSKLQSEAVREAITTIKGKSEEKKRNFVETVELQIGLKNYDPQKDKRFSGSVKLPHIPRPKMKICMLGDAQHVEEAEKMGLSNMDVEALKKLNKNKKLVKKLAKSYHAFLASESVIKQIPRLLGPGLNKAGKFPTLVSHQESLEAKVNETKATVKFQLKKVLCMGVAVGNLSMEEKQLFQNVQMSVNFLVSLLKKNWQNVRCLYLKSTMGPPQRIF.

The protein belongs to the universal ribosomal protein uL1 family. As to quaternary structure, interacts with the GTPase NUG2.

The chain is Large ribosomal subunit protein uL1y (RPL10AB) from Arabidopsis thaliana (Mouse-ear cress).